Here is a 254-residue protein sequence, read N- to C-terminus: UPF0173 protein YddR (254 aa).

Belongs to the UPF0173 family.

The protein is UPF0173 protein YddR (yddR) of Bacillus subtilis (strain 168).